The primary structure comprises 413 residues: MGSLSTILRHPDELYPLLKLKLAITKAQKQIPLEPHLAFCYSILHKVSKSFSLVIQQLGTELRNAVCVFYLILRALDTVEDDTSVPVEIKVPILIAFHRHIYDGDWHFSCGTKEYKLLMDQFHHVSAAFLKLEKGYQEAIEDITKRMGAGMAKFICKEVETIDDYDEYCHYAAGLVGLGLSKIFIASELEILTPDWKQISNSTGLFLQKTNIIKDYLEDINERPKSRMFWPREIWGKYVDKLEDFKNEEKATKAVQCLNEMVTNALNHVEDCLKSLASLRDPAIFQSCAIPQIVAIGTLALCYNNVQVFRGVVRLRRGLIAKVIDRTKTMDDVYGAFYDFSCMLQTKVDNNDPNAMKTLNRLETIKKFCKENGGLHKRKSYVNDETQSKAIFVVMFVLLLAIVVVYLKANQCK.

At Gly2 the chain carries N-acetylglycine. 2 helical membrane passes run 283-303 (AIFQ…ALCY) and 390-410 (AIFV…LKAN).

It belongs to the phytoene/squalene synthase family. Mg(2+) is required as a cofactor. Mn(2+) serves as cofactor. Mostly expressed in hypocotyls, leaves and cotyledons, and, to a lower extent, in stems.

The protein localises to the endoplasmic reticulum membrane. In Arabidopsis thaliana (Mouse-ear cress), this protein is Inactive squalene synthase 2.